The primary structure comprises 385 residues: Benzoate O-methyltransferase (385 aa).

S-adenosyl-L-homocysteine is bound at residue Tyr-18. Residue Gln-25 participates in benzoate binding. The S-adenosyl-L-homocysteine site is built by Cys-59, Asn-64, Asp-106, Leu-107, Ser-145, and Tyr-146. Trp-167 contributes to the benzoate binding site. Mg(2+) is bound by residues Asn-184, Glu-270, Phe-272, and Asn-273.

The protein belongs to the methyltransferase superfamily. Type-7 methyltransferase family. SABATH subfamily. Mg(2+) serves as cofactor.

The catalysed reaction is benzoate + S-adenosyl-L-methionine = methyl benzoate + S-adenosyl-L-homocysteine. Its function is as follows. Methyltransferase involved in the biosynthesis of methyl benzoate in response to stresses. Utilizes exclusively benzoic acid (BA) as substrate. This is Benzoate O-methyltransferase (OMT8) from Zea mays (Maize).